The sequence spans 235 residues: Small ribosomal subunit protein uS2c (235 aa).

Belongs to the universal ribosomal protein uS2 family.

The protein resides in the plastid. The protein localises to the chloroplast. This is Small ribosomal subunit protein uS2c (rps2) from Guillardia theta (Cryptophyte).